The primary structure comprises 206 residues: Probable N-acetyltransferase 14 (206 aa).

Positions 55 to 206 (LRFVLASFAL…TLVREFSKEL (152 aa)) constitute an N-acetyltransferase domain. Residues 57-77 (FVLASFALALLLPVFLAVAAM) form a helical membrane-spanning segment.

Belongs to the camello family.

It is found in the membrane. In terms of biological role, probable acetyltransferase. Functionally, may act as a transcription factor regulating the expression of coproporphyrinogen oxidase by binding to a promoter regulatory element. This is Probable N-acetyltransferase 14 from Bos taurus (Bovine).